We begin with the raw amino-acid sequence, 97 residues long: Defensin-like protein 196 (97 aa).

Positions 1-28 (MAKMSALSIFAIFIILVLVIFEIPEIEA) are cleaved as a signal peptide. Intrachain disulfides connect Cys-33/Cys-85, Cys-46/Cys-70, Cys-55/Cys-80, and Cys-59/Cys-82.

This sequence belongs to the DEFL family. Protease inhibitor I18 (RTI/MTI-2) subfamily.

It localises to the secreted. In Arabidopsis thaliana (Mouse-ear cress), this protein is Defensin-like protein 196 (ATTI4).